Consider the following 326-residue polypeptide: Pyruvate dehydrogenase E1 component subunit alpha (326 aa).

In terms of assembly, heterodimer of an alpha and a beta chain. Thiamine diphosphate serves as cofactor.

The catalysed reaction is N(6)-[(R)-lipoyl]-L-lysyl-[protein] + pyruvate + H(+) = N(6)-[(R)-S(8)-acetyldihydrolipoyl]-L-lysyl-[protein] + CO2. The pyruvate dehydrogenase complex catalyzes the overall conversion of pyruvate to acetyl-CoA and CO(2). It contains multiple copies of three enzymatic components: pyruvate dehydrogenase (E1), dihydrolipoamide acetyltransferase (E2) and lipoamide dehydrogenase (E3). This is Pyruvate dehydrogenase E1 component subunit alpha (pdhA) from Rickettsia bellii (strain RML369-C).